The primary structure comprises 102 residues: DET1- and DDB1-associated protein 1 (102 aa).

A disordered region spans residues 67 to 102 (NAAKKRDQEQVEIEGENSAPPRKIARTDSQDMNEDT).

This sequence belongs to the DDA1 family. In terms of assembly, component of numerous DCX (DDB1-CUL4-X-box) E3 ubiquitin-protein ligase complexes which consist of a core of DDB1, cullin-4 (CUL4A or CUL4B), DDA1 and RBX1.

It participates in protein modification; protein ubiquitination. Functionally, functions as a component of numerous distinct DCX (DDB1-CUL4-X-box) E3 ubiquitin-protein ligase complexes which mediate the ubiquitination and subsequent proteasomal degradation of target proteins. In the DCX complexes, acts as a scaffolding subunit required to stabilize the complex. The polypeptide is DET1- and DDB1-associated protein 1 (Gallus gallus (Chicken)).